Consider the following 220-residue polypeptide: 7-cyano-7-deazaguanine synthase (220 aa).

An ATP-binding site is contributed by Phe-10–Leu-20. Cys-186, Cys-195, Cys-198, and Cys-201 together coordinate Zn(2+).

It belongs to the QueC family. As to quaternary structure, homodimer. Zn(2+) serves as cofactor.

It catalyses the reaction 7-carboxy-7-deazaguanine + NH4(+) + ATP = 7-cyano-7-deazaguanine + ADP + phosphate + H2O + H(+). It participates in purine metabolism; 7-cyano-7-deazaguanine biosynthesis. Catalyzes the ATP-dependent conversion of 7-carboxy-7-deazaguanine (CDG) to 7-cyano-7-deazaguanine (preQ(0)). The polypeptide is 7-cyano-7-deazaguanine synthase (Bacillus thuringiensis (strain Al Hakam)).